An 81-amino-acid chain; its full sequence is Sulfur carrier protein TusA (81 aa).

Cysteine 19 functions as the Cysteine persulfide intermediate in the catalytic mechanism.

Belongs to the sulfur carrier protein TusA family. In terms of assembly, interacts with IscS.

It localises to the cytoplasm. The protein operates within tRNA modification. Sulfur carrier protein involved in sulfur trafficking in the cell. Part of a sulfur-relay system required for 2-thiolation during synthesis of 2-thiouridine of the modified wobble base 5-methylaminomethyl-2-thiouridine (mnm(5)s(2)U) in tRNA. Interacts with IscS and stimulates its cysteine desulfurase activity. Accepts an activated sulfur from IscS, which is then transferred to TusD, and thus determines the direction of sulfur flow from IscS to 2-thiouridine formation. Also appears to be involved in sulfur transfer for the biosynthesis of molybdopterin. The chain is Sulfur carrier protein TusA from Klebsiella pneumoniae subsp. pneumoniae (strain ATCC 700721 / MGH 78578).